We begin with the raw amino-acid sequence, 102 residues long: Small ribosomal subunit protein eS24 (102 aa).

It belongs to the eukaryotic ribosomal protein eS24 family.

This chain is Small ribosomal subunit protein eS24, found in Methanococcoides burtonii (strain DSM 6242 / NBRC 107633 / OCM 468 / ACE-M).